The following is a 135-amino-acid chain: DNA-directed RNA polymerase subunit omega (135 aa).

It belongs to the RNA polymerase subunit omega family. The RNAP catalytic core consists of 2 alpha, 1 beta, 1 beta' and 1 omega subunit. When a sigma factor is associated with the core the holoenzyme is formed, which can initiate transcription.

It carries out the reaction RNA(n) + a ribonucleoside 5'-triphosphate = RNA(n+1) + diphosphate. Its function is as follows. Promotes RNA polymerase assembly. Latches the N- and C-terminal regions of the beta' subunit thereby facilitating its interaction with the beta and alpha subunits. The sequence is that of DNA-directed RNA polymerase subunit omega from Sinorhizobium medicae (strain WSM419) (Ensifer medicae).